A 189-amino-acid chain; its full sequence is Nucleolar protein 16 (189 aa).

Over residues 1-33 (MARDVKKRGKPAYTNRRNRQKYLKKKDNKKKLS) the composition is skewed to basic residues. Residues 1–34 (MARDVKKRGKPAYTNRRNRQKYLKKKDNKKKLSK) form a disordered region.

The protein belongs to the NOP16 family.

The protein resides in the nucleus. The protein localises to the nucleolus. This Caenorhabditis elegans protein is Nucleolar protein 16.